The following is a 928-amino-acid chain: Protein ARABIDILLO 2 (928 aa).

Residues 3–8 (RRVRQR) carry the Nuclear localization signal motif. An F-box domain is found at 37-83 (YVNWTSLPYDTVFHLFTRLNYRDRASLASTCRTWRSLGASSFLWSSL). 13 ARM repeats span residues 147–186 (AARH…KLRV), 237–278 (TSNI…KSSQ), 303–341 (KGKV…DLIR), 370–409 (SQGL…TFIV), 419–458 (CGRA…NLSV), 460–499 (AKVA…NLSV), 501–543 (EEHK…NLAA), 545–585 (DKCS…NLAA), 591–630 (GNNA…NLAF), 632–674 (DKNR…GLSV), 676–715 (EANS…NLSF), 717–757 (PGNA…YMFD), and 824–864 (IPEA…QFTI).

Belongs to the beta-catenin family. Expressed ubiquitously.

It localises to the nucleus. In terms of biological role, promotes lateral root initiation and development, independently of auxin (IAA) and abscisis acid (ABA). The chain is Protein ARABIDILLO 2 from Arabidopsis thaliana (Mouse-ear cress).